Here is a 717-residue protein sequence, read N- to C-terminus: Myc proto-oncogene protein (717 aa).

At Thr-217 the chain carries Phosphothreonine. Ser-220 is subject to Phosphoserine. Disordered regions lie at residues 288 to 376, 462 to 535, and 555 to 584; these read LNQH…KNNS, TPAS…LKDP, and HSSMMSKKSRGKKVVGTSSGNTSPISSGQD. Positions 298–311 are enriched in low complexity; it reads QQQLNQQQLDEQQQ. Residues 351–360 show a composition bias toward polar residues; it reads KSGSNASITT. The segment covering 361-376 has biased composition (low complexity); the sequence is NNNNSNNKNNKLKNNS. Positions 462–488 are enriched in polar residues; the sequence is TPASSSPVKSVANSRYPSPSSTPYQNC. The segment covering 489-523 has biased composition (low complexity); that stretch reads SSASPSYSPLSVDSSNVSSSSSSSSSQSSFTTSSS. Residues 625–638 form a basic motif region; that stretch reads EKRNQHNDMERQRR. The region spanning 625-677 is the bHLH domain; sequence EKRNQHNDMERQRRIGLKNLFEALKKQIPTIRDKERAPKVNILREAAKLCIQL. The helix-loop-helix motif stretch occupies residues 639–677; the sequence is IGLKNLFEALKKQIPTIRDKERAPKVNILREAAKLCIQL.

Belongs to the Myc transcription factor family. As to quaternary structure, efficient DNA binding requires dimerization with another bHLH protein. Binds DNA as a heterodimer with Max. Interacts with ago. Interacts with lid. Part of a complex containing lid, Myc and ash2. Component of a complex with pont and rept. Interacts with puf. Interacts with wh/wuho; the interaction may be mediated by mei-P26 and may be involved in the regulation of ribosome biogenesis. Probably targeted for ubiquitination by the SFC ubiquitin ligase complex member ago, leading to its proteasomal degradation. In terms of tissue distribution, low levels detected throughout embryo before cellular blastoderm formation, particularly concentrated in pole plasm. Zygotic expression detected during cellular blastoderm stage in endodermal anlagen of anterior and posterior midgut at both poles. After gastrulation, expression detected in invaginating ventral furrow of mesoderm. Continued expression in anterior and posterior midgut and mesoderm during germband extension. During late germ-band retraction, expression remains detectable in fusing midgut and presumed developing somatic musculature.

The protein resides in the nucleus. The protein localises to the nucleolus. Its subcellular location is the cytoplasm. Functionally, participates in the regulation of gene transcription. Binds DNA in a non-specific manner, yet also specifically recognizes the core sequence CAC[GA]TG. Seems to activate the transcription of growth-related genes; required for cellular proliferation and growth. Functions in the TORC2-mediated regulation of cell growth, acting downstream of the TORC2 complex. Inhibits the demethylase activity of Lid. Activates transcription of mbm. Has a role in ribosome biogenesis and endoreplication in fat body cells by activating the transcription of LTV1. Able to induce the SCF E3 ubiquitin-protein ligase member archipelago (ago) which functions in its degradation. It may therefore create a negative feedback loop with ago that is regulated by the ubiquitin hydrolase puf. In dopaminergic neurons, regulates dopamine levels by binding to the E-box (E1) of the dopamine decarboxylase Ddc promoter and thereby inhibiting its transcription. This regulation is required to suppress male-male courtship. Involved in the acs and insulin signaling mediated non-cell-autonomous induction of amino acid release into the hemolymph following the cytoplasmic purge response to intestinal bacterial infection; required for efficient recovery of enterocyte thickness. The sequence is that of Myc proto-oncogene protein from Drosophila melanogaster (Fruit fly).